A 1172-amino-acid chain; its full sequence is Structural maintenance of chromosomes protein 2 (1172 aa).

32–39 serves as a coordination point for ATP; the sequence is GLNGSGKS. 2 coiled-coil regions span residues 172–204 and 258–507; these read RMFEERKEKAFRTMQRKEAKVEEINTLLREEIE and SHIA…AYME. The SMC hinge domain maps to 520–640; that stretch reads SKVKGLVAQL…CDTPESAKKV (121 aa). Positions 676–941 form a coiled coil; the sequence is LLQIQKLNSL…INHLEKENDW (266 aa).

This sequence belongs to the SMC family. SMC2 subfamily. In terms of assembly, forms a heterodimer with cut3/smc4. Component of the condensin complex, which contains the cut3 and cut14 heterodimer, and three non smc subunits that probably regulate the complex: cnd1, cnd2 and cnd3.

It is found in the nucleus. The protein resides in the cytoplasm. The protein localises to the chromosome. Central component of the condensin complex, a complex required for conversion of interphase chromatin into mitotic-like condense chromosomes. The condensin complex probably introduces positive supercoils into relaxed DNA in the presence of type I topoisomerases and converts nicked DNA into positive knotted forms in the presence of type II topoisomerases. The polypeptide is Structural maintenance of chromosomes protein 2 (cut14) (Schizosaccharomyces pombe (strain 972 / ATCC 24843) (Fission yeast)).